The primary structure comprises 247 residues: Adenosylcobinamide-GDP ribazoletransferase (247 aa).

The next 6 helical transmembrane spans lie at 34-54 (IVMFPFIGLILGGISGLIFIL), 59-79 (CGIPLAALFCILALALLTGGF), 113-133 (GGLALIFVLLAKILVVSELAL), 138-158 (MLAALAVACAAGHGSAVLLMY), 171-191 (VFIGKVSGRQTCITLGLAVIV), and 194-214 (VLLPGMQGLATMVVTLAAIFI).

Belongs to the CobS family. It depends on Mg(2+) as a cofactor.

It localises to the cell inner membrane. The enzyme catalyses alpha-ribazole + adenosylcob(III)inamide-GDP = adenosylcob(III)alamin + GMP + H(+). It carries out the reaction alpha-ribazole 5'-phosphate + adenosylcob(III)inamide-GDP = adenosylcob(III)alamin 5'-phosphate + GMP + H(+). It functions in the pathway cofactor biosynthesis; adenosylcobalamin biosynthesis; adenosylcobalamin from cob(II)yrinate a,c-diamide: step 7/7. Its function is as follows. Joins adenosylcobinamide-GDP and alpha-ribazole to generate adenosylcobalamin (Ado-cobalamin). Also synthesizes adenosylcobalamin 5'-phosphate from adenosylcobinamide-GDP and alpha-ribazole 5'-phosphate. This chain is Adenosylcobinamide-GDP ribazoletransferase, found in Salmonella paratyphi A (strain ATCC 9150 / SARB42).